The primary structure comprises 211 residues: Ribosomal RNA large subunit methyltransferase E (211 aa).

The S-adenosyl-L-methionine site is built by Gly-60, Trp-62, Asp-85, Asp-101, and Asp-126. Catalysis depends on Lys-166, which acts as the Proton acceptor.

Belongs to the class I-like SAM-binding methyltransferase superfamily. RNA methyltransferase RlmE family.

The protein localises to the cytoplasm. It catalyses the reaction uridine(2552) in 23S rRNA + S-adenosyl-L-methionine = 2'-O-methyluridine(2552) in 23S rRNA + S-adenosyl-L-homocysteine + H(+). In terms of biological role, specifically methylates the uridine in position 2552 of 23S rRNA at the 2'-O position of the ribose in the fully assembled 50S ribosomal subunit. This Bordetella petrii (strain ATCC BAA-461 / DSM 12804 / CCUG 43448) protein is Ribosomal RNA large subunit methyltransferase E.